The sequence spans 80 residues: Protein FAM229B (80 aa).

The interval 1-44 (MPFRFGTQPRRFPVEGGDSSIGLEPGLSSSAACNGKEMSPTRQL) is disordered.

The protein belongs to the FAM229 family.

The sequence is that of Protein FAM229B (FAM229B) from Macaca fascicularis (Crab-eating macaque).